A 793-amino-acid polypeptide reads, in one-letter code: Pentatricopeptide repeat-containing protein At1g03100, mitochondrial (793 aa).

The transit peptide at 1–87 (MFSLRKTKLQ…REAISSISGS (87 aa)) directs the protein to the mitochondrion. PPR repeat units follow at residues 257–291 (NTQV…GVKA), 292–322 (DANL…IDEA), 330–364 (FWQF…GKVA), 458–492 (TEEI…DSPV), 495–529 (DNSM…GVRT), 530–564 (GSSV…GIQL), 565–599 (DSSC…KILR), 601–631 (GNQK…IREV), 637–671 (GVHD…GHSP), 672–707 (NAQT…AAAT), and 713–747 (DQEL…NMFV).

The protein belongs to the PPR family. P subfamily.

Its subcellular location is the mitochondrion. The protein is Pentatricopeptide repeat-containing protein At1g03100, mitochondrial of Arabidopsis thaliana (Mouse-ear cress).